A 1004-amino-acid polypeptide reads, in one-letter code: Protein CHUP1, chloroplastic (1004 aa).

The tract at residues 1-25 (MFVRIGFVVAASIAAVTVKRLNVKP) is required for chloroplast localization. The tract at residues 22–63 (NVKPSKPSKPSDNGEGGDKEQSVDPDYNLNDKNLQEEEEEEE) is disordered. Positions 123-341 (EMAYNDGELE…KQVEGLQMNR (219 aa)) form a coiled coil. The leucine-zipper 1 stretch occupies residues 269-290 (LEVQVMELKRKNRELQHEKREL). 4 disordered regions span residues 398–482 (GSER…SMNK), 504–536 (FGQV…GEGL), 612–718 (TATG…GNKV), and 736–755 (SKKE…SSAA). At serine 399 the chain carries Phosphoserine. A compositionally biased stretch (polar residues) spans 409–419 (ESNYSQPSSPG). Residues 427–439 (SMDSSTSRFSSFS) are compositionally biased toward low complexity. Polar residues-rich tracts occupy residues 504–517 (FGQV…TPET) and 612–624 (TATG…SNES). Over residues 670–706 (ARPPLPGGGPPPPPPPPGGGPPPPPGGGPPPPPPPPG) the composition is skewed to pro residues. The segment covering 744-755 (LISSGTGNSSAA) has biased composition (polar residues). The leucine-zipper 2 stretch occupies residues 802–823 (LLAFVSWLDEELSFLVDERAVL). Residues 979-1004 (RSRAKTESGDNNNNNNNNSNEEESVN) form a disordered region.

In terms of tissue distribution, expressed in cauline leaves, rosette leaves, stems and flowers, but not in roots.

Its subcellular location is the plastid. The protein localises to the chloroplast outer membrane. Required for the positioning and movement of chloroplasts. Interacts with profilin and actin independent of its polymerization status. Regulates chloroplast localization by anchoring chloroplasts to the plasma membrane and forming a bridge to the actin cytoskeleton. This Arabidopsis thaliana (Mouse-ear cress) protein is Protein CHUP1, chloroplastic (CHUP1).